The following is a 443-amino-acid chain: uncharacterized protein (443 aa).

Residues 1-21 (MQSVTPPPTQQGKPDPTNSDM) are disordered. The segment covering 10 to 20 (QQGKPDPTNSD) has biased composition (polar residues).

This is an uncharacterized protein from Caenorhabditis elegans.